Reading from the N-terminus, the 103-residue chain is Large ribosomal subunit protein eL21 (103 aa).

The protein belongs to the eukaryotic ribosomal protein eL21 family.

The polypeptide is Large ribosomal subunit protein eL21 (Sulfolobus acidocaldarius (strain ATCC 33909 / DSM 639 / JCM 8929 / NBRC 15157 / NCIMB 11770)).